Consider the following 187-residue polypeptide: Transmembrane protein 17A (187 aa).

The next 4 helical transmembrane spans lie at 49 to 69 (IFLY…VIML), 82 to 102 (FILV…LYLG), 114 to 134 (LAGF…FLLC), and 146 to 166 (AVHG…IFAL).

This sequence belongs to the TMEM17 family. As to quaternary structure, part of the tectonic-like complex (also named B9 complex).

The protein localises to the cell projection. Its subcellular location is the cilium membrane. Functionally, transmembrane component of the tectonic-like complex, a complex localized at the transition zone of primary cilia and acting as a barrier that prevents diffusion of transmembrane proteins between the cilia and plasma membranes. Required for ciliogenesis and sonic hedgehog/SHH signaling. This is Transmembrane protein 17A (tmem17-a) from Xenopus tropicalis (Western clawed frog).